The sequence spans 653 residues: Zinc finger CCCH domain-containing protein 54 (653 aa).

A disordered region spans residues 242–261 (NGGGGGGGSPARARRSNGLS). A C3H1-type zinc finger spans residues 260–287 (LSTRRPCHYFSKGICKNGQNCHYSHHQV). One can recognise an HTH OST-type domain in the interval 313 to 396 (SLETLEMEIT…GQHSVVLAED (84 aa)). The RRM domain occupies 422 to 497 (HQIYLTFPAE…SRVLVKPYRE (76 aa)). The stretch at 537–565 (RLMRKQLAEKREMLLEMERRRATVRRLES) forms a coiled coil. The tract at residues 598-623 (PSLASPDPLEIVSNSQAPPTQAGNIY) is disordered. Positions 609–620 (VSNSQAPPTQAG) are enriched in polar residues.

The sequence is that of Zinc finger CCCH domain-containing protein 54 from Oryza sativa subsp. japonica (Rice).